The primary structure comprises 93 residues: Pyrimidine/purine nucleoside phosphorylase (93 aa).

It belongs to the nucleoside phosphorylase PpnP family.

The catalysed reaction is a purine D-ribonucleoside + phosphate = a purine nucleobase + alpha-D-ribose 1-phosphate. It catalyses the reaction adenosine + phosphate = alpha-D-ribose 1-phosphate + adenine. It carries out the reaction cytidine + phosphate = cytosine + alpha-D-ribose 1-phosphate. The enzyme catalyses guanosine + phosphate = alpha-D-ribose 1-phosphate + guanine. The catalysed reaction is inosine + phosphate = alpha-D-ribose 1-phosphate + hypoxanthine. It catalyses the reaction thymidine + phosphate = 2-deoxy-alpha-D-ribose 1-phosphate + thymine. It carries out the reaction uridine + phosphate = alpha-D-ribose 1-phosphate + uracil. The enzyme catalyses xanthosine + phosphate = alpha-D-ribose 1-phosphate + xanthine. Catalyzes the phosphorolysis of diverse nucleosides, yielding D-ribose 1-phosphate and the respective free bases. Can use uridine, adenosine, guanosine, cytidine, thymidine, inosine and xanthosine as substrates. Also catalyzes the reverse reactions. The protein is Pyrimidine/purine nucleoside phosphorylase of Cellvibrio japonicus (strain Ueda107) (Pseudomonas fluorescens subsp. cellulosa).